Here is a 194-residue protein sequence, read N- to C-terminus: Inosine triphosphate pyrophosphatase (194 aa).

10–15 (TTNLKK) provides a ligand contact to ITP. E36 is a binding site for Mg(2+). Residues K48, 66–67 (DT), K83, K166, and 171–172 (HR) contribute to the ITP site.

This sequence belongs to the HAM1 NTPase family. Homodimer. Mg(2+) is required as a cofactor. Requires Mn(2+) as cofactor.

Its subcellular location is the cytoplasm. It localises to the nucleus. The catalysed reaction is ITP + H2O = IMP + diphosphate + H(+). It catalyses the reaction dITP + H2O = dIMP + diphosphate + H(+). It carries out the reaction XTP + H2O = XMP + diphosphate + H(+). Functionally, pyrophosphatase that hydrolyzes non-canonical purine nucleotides such as inosine triphosphate (ITP), deoxyinosine triphosphate (dITP) or xanthosine 5'-triphosphate (XTP) to their respective monophosphate derivatives. The enzyme does not distinguish between the deoxy- and ribose forms. Probably excludes non-canonical purines from RNA and DNA precursor pools, thus preventing their incorporation into RNA and DNA and avoiding chromosomal lesions. This Encephalitozoon intestinalis (strain ATCC 50506) (Microsporidian parasite) protein is Inosine triphosphate pyrophosphatase.